A 67-amino-acid chain; its full sequence is Neurotoxin Cex9 (67 aa).

Residues Lys1 to Gly65 form the LCN-type CS-alpha/beta domain. 4 disulfide bridges follow: Cys11/Cys64, Cys15/Cys40, Cys24/Cys45, and Cys28/Cys47. Cys64 is subject to Cysteine amide. Residues Gly65–Lys67 constitute a propeptide that is removed on maturation.

This sequence belongs to the long (4 C-C) scorpion toxin superfamily. Sodium channel inhibitor family. Beta subfamily. In terms of tissue distribution, expressed by the venom gland.

The protein localises to the secreted. Its function is as follows. Beta toxins bind voltage-independently at site-4 of sodium channels (Nav) and shift the voltage of activation toward more negative potentials thereby affecting sodium channel activation and promoting spontaneous and repetitive firing. The protein is Neurotoxin Cex9 of Centruroides exilicauda (Bark scorpion).